Here is a 573-residue protein sequence, read N- to C-terminus: MADQVKERTLEETSTWAVAVVCFVLLFISIVLEHSIHKIGTWFKKKHKQALFEALEKVKAELMLLGFISLLLTIGQTPISNICISQKVASTMHPCSAAEEAKKYGKKDAGKKDDGDGDKPGRRLLLELAESYIHRRSLATKGYDKCAEKGKVAFVSAYGIHQLHIFIFVLAVVHVVYCIVTYAFGKIKMRTWKSWEEETKTIEYQYSNDPERFRFARDTSFGRRHLNFWSKTRVTLWIVCFFRQFFGSVTKVDYLALRHGFIMAHFAPGNESRFDFRKYIQRSLEKDFKTVVEISPVIWFVAVLFLLTNSYGLRSYLWLPFIPLVVILIVGTKLEVIITKLGLRIQEKGDVVRGAPVVQPGDDLFWFGKPRFILFLIHLVLFTNAFQLAFFAWSTYEFNLNNCFHESTADVVIRLVVGAVVQILCSYVTLPLYALVTQMGSKMKPTVFNDRVATALKKWHHTAKNETKHGRHSGSNTPFSSRPTTPTHGSSPIHLLHNFNNRSVENYPSSPSPRYSGHGHHEHQFWDPESQHQEAETSTHHSLAHESSEPVLASVELPPIRTSKSLRDFSFKK.

Over 1-15 (MADQVKERTLEETST) the chain is Extracellular. The helical transmembrane segment at 16 to 36 (WAVAVVCFVLLFISIVLEHSI) threads the bilayer. The Cytoplasmic segment spans residues 37 to 61 (HKIGTWFKKKHKQALFEALEKVKAE). Residues 62–82 (LMLLGFISLLLTIGQTPISNI) traverse the membrane as a helical segment. Residues 83–164 (CISQKVASTM…VSAYGIHQLH (82 aa)) lie on the Extracellular side of the membrane. The helical transmembrane segment at 165-185 (IFIFVLAVVHVVYCIVTYAFG) threads the bilayer. The Cytoplasmic portion of the chain corresponds to 186–287 (KIKMRTWKSW…KYIQRSLEKD (102 aa)). Residues 288-308 (FKTVVEISPVIWFVAVLFLLT) traverse the membrane as a helical segment. The Extracellular segment spans residues 309 to 317 (NSYGLRSYL). Residues 318 to 338 (WLPFIPLVVILIVGTKLEVII) form a helical membrane-spanning segment. The Cytoplasmic portion of the chain corresponds to 339 to 371 (TKLGLRIQEKGDVVRGAPVVQPGDDLFWFGKPR). A helical membrane pass occupies residues 372–392 (FILFLIHLVLFTNAFQLAFFA). At 393–415 (WSTYEFNLNNCFHESTADVVIRL) the chain is on the extracellular side. The chain crosses the membrane as a helical span at residues 416 to 436 (VVGAVVQILCSYVTLPLYALV). At 437-573 (TQMGSKMKPT…KSLRDFSFKK (137 aa)) the chain is on the cytoplasmic side. The tract at residues 450 to 471 (DRVATALKKWHHTAKNETKHGR) is calmodulin-binding. Residues 462–573 (TAKNETKHGR…KSLRDFSFKK (112 aa)) are disordered. 2 stretches are compositionally biased toward polar residues: residues 473–490 (SGSN…THGS) and 498–513 (NFNN…SPSP). Position 512 is a phosphoserine (Ser-512). The segment covering 522-548 (EHQFWDPESQHQEAETSTHHSLAHESS) has biased composition (basic and acidic residues).

Belongs to the MLO family.

Its subcellular location is the membrane. Its function is as follows. May be involved in modulation of pathogen defense and leaf cell death. Activity seems to be regulated by Ca(2+)-dependent calmodulin binding and seems not to require heterotrimeric G proteins. In Arabidopsis thaliana (Mouse-ear cress), this protein is MLO-like protein 2 (MLO2).